Here is a 598-residue protein sequence, read N- to C-terminus: MTHRNIKIGLEIHFQLNTGKLFCRCPVETSGTEKYRFERHLHVSESEMGRIDAAAKYESERSRTFEYVVTDNSCLVECDEDPPKMPNEDAIATAISVARALNCDILDYITYMRKIVIDGSNTSGFQRTAIIGINGYIETSKGKVRISTVCLEEDAARKIEEKEGTVVYSLDRLGIPLIEISTEPDIIDEEHAVEVAKKIGYYVISTGKSRKAPDSVRQDVNFSMGFGRVEIKGVSKLSQIKEVLKYEIQRQDMLKKASDLIKLRGGFDRSRFYFIDVTDLLVNTSSKVVNSGLKTGRAYAALCTNLAGTLKSGEYRLGKELADLVRAYGLKGLLHSDELPGYGLKESDIQPIYDRLQKDELDGVIILLSPQEKIGIIEEEIANRIEKLISLDLSETRGPTEDSTVFLRPMPGKDRMYPETDIPVIAVSKDILQKSDKIKSVGFEDLVSSIITKYGISKQVAESLASDMKIQELEELSTYLDPRESARVLTQIIPYLEKKYAKKFDNNLIFVLVRLMSDRKFDRYQVEKALEILFSENKDPALIVSDERLIELTKDEICEIIDKLKKSGITITKANVVSVLKKNTDRIFDPSMAIECLG.

Belongs to the GatB/GatE family. GatE subfamily. Heterodimer of GatD and GatE.

It catalyses the reaction L-glutamyl-tRNA(Gln) + L-glutamine + ATP + H2O = L-glutaminyl-tRNA(Gln) + L-glutamate + ADP + phosphate + H(+). Functionally, allows the formation of correctly charged Gln-tRNA(Gln) through the transamidation of misacylated Glu-tRNA(Gln) in organisms which lack glutaminyl-tRNA synthetase. The reaction takes place in the presence of glutamine and ATP through an activated gamma-phospho-Glu-tRNA(Gln). The GatDE system is specific for glutamate and does not act on aspartate. This is Glutamyl-tRNA(Gln) amidotransferase subunit E from Thermoplasma volcanium (strain ATCC 51530 / DSM 4299 / JCM 9571 / NBRC 15438 / GSS1).